A 129-amino-acid polypeptide reads, in one-letter code: Prefoldin subunit 6 (129 aa).

A2 carries the N-acetylalanine modification. K21 carries the N6-acetyllysine modification. At K66 the chain carries N6-acetyllysine; alternate. K66 is covalently cross-linked (Glycyl lysine isopeptide (Lys-Gly) (interchain with G-Cter in SUMO1); alternate). A Glycyl lysine isopeptide (Lys-Gly) (interchain with G-Cter in SUMO2); alternate cross-link involves residue K66.

It belongs to the prefoldin subunit beta family. Heterohexamer of two PFD-alpha type and four PFD-beta type subunits. Component of the PAQosome complex which is responsible for the biogenesis of several protein complexes and which consists of R2TP complex members RUVBL1, RUVBL2, RPAP3 and PIH1D1, URI complex members PFDN2, PFDN6, PDRG1, UXT and URI1 as well as ASDURF, POLR2E and DNAAF10/WDR92.

Functionally, binds specifically to cytosolic chaperonin (c-CPN) and transfers target proteins to it. Binds to nascent polypeptide chain and promotes folding in an environment in which there are many competing pathways for nonnative proteins. The protein is Prefoldin subunit 6 (PFDN6) of Bos taurus (Bovine).